Reading from the N-terminus, the 423-residue chain is UPF0597 protein TTE0269 (423 aa).

It belongs to the UPF0597 family.

This chain is UPF0597 protein TTE0269, found in Caldanaerobacter subterraneus subsp. tengcongensis (strain DSM 15242 / JCM 11007 / NBRC 100824 / MB4) (Thermoanaerobacter tengcongensis).